The following is a 552-amino-acid chain: Cytochrome c oxidase subunit 1 (552 aa).

A helical membrane pass occupies residues V35 to A55. H82 serves as a coordination point for Fe(II)-heme a. 6 consecutive transmembrane segments (helical) span residues I85–P105, A120–G140, W164–V184, L211–I231, L252–M272, and I284–V304. Residues H258 and Y262 each coordinate Cu cation. The segment at residues H258–Y262 is a cross-link (1'-histidyl-3'-tyrosine (His-Tyr)). 2 residues coordinate Cu cation: H307 and H308. Helical transmembrane passes span F321–V341, M355–L375, V390–I410, L426–H446, and I470–I490. Residue H393 coordinates heme a3. H395 contacts Fe(II)-heme a.

This sequence belongs to the heme-copper respiratory oxidase family. It depends on Cu(2+) as a cofactor. The cofactor is heme.

The protein localises to the cell membrane. The enzyme catalyses 4 Fe(II)-[cytochrome c] + O2 + 8 H(+)(in) = 4 Fe(III)-[cytochrome c] + 2 H2O + 4 H(+)(out). The protein operates within energy metabolism; oxidative phosphorylation. Its function is as follows. Cytochrome c oxidase is the component of the respiratory chain that catalyzes the reduction of oxygen to water. Subunits 1-3 form the functional core of the enzyme complex. CO I is the catalytic subunit of the enzyme. Electrons originating in cytochrome c are transferred via the copper A center of subunit 2 and heme A of subunit 1 to the bimetallic center formed by heme A3 and copper B. This is Cytochrome c oxidase subunit 1 (ctaD) from Thermostichus vulcanus (Synechococcus vulcanus).